Reading from the N-terminus, the 160-residue chain is S-protein homolog 13 (160 aa).

A signal peptide spans 1–27; sequence MGRDLGWCFFVATVLLAAVLLPAPTIA.

This sequence belongs to the plant self-incompatibility (S1) protein family.

It is found in the secreted. The sequence is that of S-protein homolog 13 from Arabidopsis thaliana (Mouse-ear cress).